The chain runs to 270 residues: Glutamate racemase (270 aa).

Residues 7–8 and 39–40 each bind substrate; these read DS and YG. Catalysis depends on cysteine 70, which acts as the Proton donor/acceptor. Substrate is bound at residue 71 to 72; that stretch reads NT. Residue cysteine 194 is the Proton donor/acceptor of the active site. Position 195-196 (195-196) interacts with substrate; that stretch reads TH.

It belongs to the aspartate/glutamate racemases family.

It catalyses the reaction L-glutamate = D-glutamate. It participates in cell wall biogenesis; peptidoglycan biosynthesis. In terms of biological role, provides the (R)-glutamate required for cell wall biosynthesis. This chain is Glutamate racemase, found in Jannaschia sp. (strain CCS1).